The chain runs to 229 residues: Cytidylate kinase (229 aa).

12-20 (GPSGAGKGT) is an ATP binding site.

This sequence belongs to the cytidylate kinase family. Type 1 subfamily.

Its subcellular location is the cytoplasm. The enzyme catalyses CMP + ATP = CDP + ADP. It carries out the reaction dCMP + ATP = dCDP + ADP. The protein is Cytidylate kinase of Pseudomonas aeruginosa (strain UCBPP-PA14).